The primary structure comprises 247 residues: uncharacterized protein (247 aa).

Residues 102–247 (RSIMSRTNDN…ISEHHYRIKR (146 aa)) enclose the N-acetyltransferase domain.

This sequence belongs to the acetyltransferase family.

This is an uncharacterized protein from Bacillus subtilis (strain 168).